The primary structure comprises 883 residues: Pre-mRNA-splicing factor syf1 homolog (883 aa).

HAT repeat units lie at residues 13–45 (INFE…HKAK), 46–78 (APNN…TRRK), 88–120 (PMYE…FMTS), 122–156 (CKIT…FVRR), 158–190 (EMPE…EADR), 268–303 (GLFD…FEEL), 368–406 (DKPA…FYEA), 463–495 (KRKI…LEES), 531–565 (NYFE…KFLE), 570–604 (TKLE…LEEE), 642–676 (YGLP…LETK), and 678–712 (GEVD…FEVR). 2 disordered regions span residues 794–851 (RGET…DEEG) and 864–883 (IPAK…SDGE). Over residues 812–834 (DEIDIGDSDEDDEEEDDDEENEM) the composition is skewed to acidic residues. Composition is skewed to polar residues over residues 835 to 844 (TNENQASAAV) and 873 to 883 (KPSNQGDSDGE).

This sequence belongs to the crooked-neck family. In terms of assembly, component of the NTC(Nineteen)/Prp19 complex composed of at least fand, Prp19,CG9667/ISY1 and Cdc5/CDC5L. Within the complex, interacts with Prp19 and ISY1/CG9667.

It localises to the nucleus. Functionally, subunit of the NTC(Nineteen)/Prp19 complex, which is part of the spliceosome. The complex participates in spliceosome assembly, its remodeling and is required for efficient spliceosome activation. Essential for efficient pre-mRNA splicing. In embryos, efficient pre-mRNA splicing of zygotic transcripts is essential during dynamic cellular processes that require rapid division and/or dramatic changes in gene expression such as blastoderm cellularization, tracheal branching morphogenesis, Malpighian morphogenesis and epidermal development. Part of its role in promoting embryo tracheal development is also due to specifically splicing bnl transcripts which results in the activation of the BNL-FGF pathway. This chain is Pre-mRNA-splicing factor syf1 homolog, found in Drosophila melanogaster (Fruit fly).